We begin with the raw amino-acid sequence, 379 residues long: Probable leucine aminopeptidase TRV_05286 (379 aa).

Positions 1 to 18 (MKIATLAVVSAFAATAIA) are cleaved as a signal peptide. Residues histidine 182 and aspartate 201 each coordinate Zn(2+). 2 N-linked (GlcNAc...) asparagine glycosylation sites follow: asparagine 202 and asparagine 226. Zn(2+) contacts are provided by glutamate 240 and aspartate 267. Cysteine 312 and cysteine 316 are oxidised to a cystine. Histidine 345 provides a ligand contact to Zn(2+).

Belongs to the peptidase M28 family. M28E subfamily. As to quaternary structure, monomer. Zn(2+) serves as cofactor.

The protein resides in the secreted. In terms of biological role, probable extracellular aminopeptidase which contributes to pathogenicity. This Trichophyton verrucosum (strain HKI 0517) protein is Probable leucine aminopeptidase TRV_05286.